Consider the following 238-residue polypeptide: Probable transcriptional regulatory protein HH_1604 (238 aa).

The protein belongs to the TACO1 family.

Its subcellular location is the cytoplasm. This is Probable transcriptional regulatory protein HH_1604 from Helicobacter hepaticus (strain ATCC 51449 / 3B1).